The primary structure comprises 189 residues: Elongation factor P (189 aa).

Residue K34 is modified to N6-(3,6-diaminohexanoyl)-5-hydroxylysine.

Belongs to the elongation factor P family. In terms of processing, may be beta-lysylated on the epsilon-amino group of Lys-34 by the combined action of EpmA and EpmB, and then hydroxylated on the C5 position of the same residue by EpmC (if this protein is present). Lysylation is critical for the stimulatory effect of EF-P on peptide-bond formation. The lysylation moiety may extend toward the peptidyltransferase center and stabilize the terminal 3-CCA end of the tRNA. Hydroxylation of the C5 position on Lys-34 may allow additional potential stabilizing hydrogen-bond interactions with the P-tRNA.

Its subcellular location is the cytoplasm. It participates in protein biosynthesis; polypeptide chain elongation. Functionally, involved in peptide bond synthesis. Alleviates ribosome stalling that occurs when 3 or more consecutive Pro residues or the sequence PPG is present in a protein, possibly by augmenting the peptidyl transferase activity of the ribosome. Modification of Lys-34 is required for alleviation. This chain is Elongation factor P, found in Alkalilimnicola ehrlichii (strain ATCC BAA-1101 / DSM 17681 / MLHE-1).